The primary structure comprises 297 residues: uncharacterized protein (297 aa).

The HTH araC/xylS-type domain maps to 187–285 (EKLIATLHAS…GYAPSAVLKN (99 aa)). 2 DNA-binding regions (H-T-H motif) span residues 204–225 (ADMAATIPCSEAWLRRLFLRYT) and 252–275 (VGEVADTLNFFDSFHFSKAFKHKF).

This is an uncharacterized protein from Escherichia coli (strain K12).